A 222-amino-acid polypeptide reads, in one-letter code: Prolactin-2C5 (222 aa).

The N-terminal stretch at 1–29 (MLPSLIQPCSWILLLLLVNSSLLWKNVAS) is a signal peptide. C33 and C40 are oxidised to a cystine. Residue N57 is glycosylated (N-linked (GlcNAc...) asparagine). Disulfide bonds link C87-C197 and C214-C222.

The protein belongs to the somatotropin/prolactin family. N-glycosylated and sialylated. Expressed in placenta (at protein level). Expressed in the tail hair follicle, with highest expression detected in the keratinocytes of the outer root sheath. Expressed in ear skin with lesser amounts in small intestine. Not detected in brain at 18 dpc, postnatal day 25 or postnatal day 55.

Its subcellular location is the secreted. This is Prolactin-2C5 from Mus musculus (Mouse).